The following is a 314-amino-acid chain: Malate dehydrogenase (314 aa).

Residues 11–16 (GSGNIG) and aspartate 35 each bind NAD(+). Substrate contacts are provided by arginine 84 and arginine 90. NAD(+) contacts are provided by residues asparagine 97 and 120–122 (ITN). The substrate site is built by asparagine 122 and arginine 153. The active-site Proton acceptor is the histidine 177.

It belongs to the LDH/MDH superfamily. MDH type 3 family.

The enzyme catalyses (S)-malate + NAD(+) = oxaloacetate + NADH + H(+). Catalyzes the reversible oxidation of malate to oxaloacetate. The polypeptide is Malate dehydrogenase (Rickettsia prowazekii (strain Madrid E)).